Consider the following 1298-residue polypeptide: DNA repair protein rad-50 (1298 aa).

ATP is bound by residues Arg-13, Asn-38, Gly-39, Gly-41, Lys-42, Thr-43, Thr-44, Ile-66, and Gln-158. Mg(2+) is bound at residue Thr-43. Residue Gln-158 coordinates Mg(2+). Coiled coils occupy residues 222–291, 317–598, and 622–660; these read ARQN…IRVE, EERA…QYRK, and AEEV…IEES. The Zinc-hook domain occupies 622–719; it reads AEEVSEKLEN…EEIIIVKAEG (98 aa). The Zn(2+) site is built by Cys-666 and Cys-669. Coiled-coil stretches lie at residues 691–719 and 754–1092; these read LSFP…KAEG and KNEK…KESI.

This sequence belongs to the SMC family. RAD50 subfamily. Component of the MRN complex composed of two heterodimers rad-50 and mre-11 associated with a single nbs-1. The cofactor is Zn(2+).

The protein resides in the nucleus. The protein localises to the chromosome. It carries out the reaction ATP + H2O = ADP + phosphate + H(+). Its function is as follows. Component of the MRN complex, which plays a central role in double-strand break (DSB) repair, DNA recombination, maintenance of telomere integrity and meiosis. The MRN complex is involved in the repair of DNA double-strand breaks (DSBs) via homologous recombination (HR), an error-free mechanism which primarily occurs during S and G2 phases. The complex (1) mediates the end resection of damaged DNA, which generates proper single-stranded DNA, a key initial steps in HR, and is (2) required for the recruitment of other repair factors and efficient activation of ATM and ATR upon DNA damage. The MRN complex possesses single-strand endonuclease activity and double-strand-specific 3'-5' exonuclease activity, which are provided by mre-11, to initiate end resection, which is required for single-strand invasion and recombination. Within the complex, rad-50 is both required to bind DNA ends and hold them in close proximity and regulate the activity of mre-11. Rad-50 provides an ATP-dependent control of mre-11 by positioning DNA ends into the mre-11 active site: ATP-binding induces a large structural change from an open form with accessible mre-11 nuclease sites into a closed form. In Caenorhabditis elegans, this protein is DNA repair protein rad-50 (rad-50).